Consider the following 387-residue polypeptide: Decapping nuclease RAI1 (387 aa).

A divalent metal cation is bound at residue Glu-172. A Phosphoserine modification is found at Ser-198. Residue Glu-221 coordinates substrate. Residues Asp-223, Glu-241, and Leu-242 each coordinate a divalent metal cation. Residues Lys-243 and Gln-267 each coordinate substrate. An interaction with RAT1 region spans residues 273–387 (IPRIIYGFKD…GFKEWRKSLK (115 aa)).

It belongs to the DXO/Dom3Z family. In terms of assembly, interacts with RAT1, RTT103 and pre-60S ribosomal subunits. Interacts with RAT1; the interaction is direct, stabilizes RAT1 protein structure and stimulates its exoribonuclease activity. The interaction also stimulates RAI1 pyrophosphohydrolase activity, probably by recruiting it to mRNA substrates. A divalent metal cation serves as cofactor.

The protein localises to the nucleus. It carries out the reaction a 5'-end NAD(+)-phospho-ribonucleoside in mRNA + H2O = a 5'-end phospho-ribonucleoside in mRNA + NAD(+) + H(+). The catalysed reaction is a 5'-end (N(7)-methyl 5'-triphosphoguanosine)-ribonucleoside-ribonucleotide in mRNA + H2O = a (N(7)-methyl 5'-triphosphoguanosine)-nucleoside + a 5'-end phospho-ribonucleoside in mRNA + H(+). The enzyme catalyses a 5'-end triphospho-ribonucleoside in mRNA + H2O = a 5'-end phospho-ribonucleoside in mRNA + diphosphate + H(+). Its function is as follows. Decapping enzyme for NAD-capped RNAs: specifically hydrolyzes the nicotinamide adenine dinucleotide (NAD) cap from a subset of RNAs by removing the entire NAD moiety from the 5'-end of an NAD-capped RNA. The NAD-cap is present at the 5'-end of some RNAs and snoRNAs. In contrast to the canonical 5'-end N7 methylguanosine (m7G) cap, the NAD cap promotes mRNA decay. Also acts as a non-canonical decapping enzyme that removes the entire cap structure of m7G capped or incompletely capped RNAs. Has decapping activity toward incomplete 5'-end m7G cap mRNAs such as unmethylated 5'-end-capped RNA (cap0), while it has no activity toward 2'-O-ribose methylated m7G cap (cap1). Also possesses RNA 5'-pyrophosphohydrolase activity by hydrolyzing the 5'-end triphosphate to release pyrophosphates. Stimulates exoribonuclease activity of RAT1, allowing it to degrade RNAs with stable secondary structure more effectively. Required for the processing of nuclear mRNA and rRNA precursors. May promote termination of transcription by RNA polymerase II. The polypeptide is Decapping nuclease RAI1 (Saccharomyces cerevisiae (strain ATCC 204508 / S288c) (Baker's yeast)).